Consider the following 146-residue polypeptide: Large ribosomal subunit protein uL15 (146 aa).

The segment covering 1-18 (MKLHELKPSEGSRKERNR) has biased composition (basic and acidic residues). Positions 1–57 (MKLHELKPSEGSRKERNRVGRGIGSGNGKTSGKGHKGQNARSGGGVRPGFEGGQMPL) are disordered. Gly residues-rich tracts occupy residues 21-31 (RGIGSGNGKTS) and 42-52 (SGGGVRPGFEG).

It belongs to the universal ribosomal protein uL15 family. In terms of assembly, part of the 50S ribosomal subunit.

Binds to the 23S rRNA. The polypeptide is Large ribosomal subunit protein uL15 (Bacillus pumilus (strain SAFR-032)).